The primary structure comprises 609 residues: UvrABC system protein C (609 aa).

Residues 19–97 form the GIY-YIG domain; sequence ISPGCYLWKS…IKKHNPRFNV (79 aa). In terms of domain architecture, UVR spans 208 to 243; sequence ESLVGDLSIKMSASSNRMDFEKAARYRDMLQRIQNF.

Belongs to the UvrC family. In terms of assembly, interacts with UvrB in an incision complex.

It localises to the cytoplasm. Its function is as follows. The UvrABC repair system catalyzes the recognition and processing of DNA lesions. UvrC both incises the 5' and 3' sides of the lesion. The N-terminal half is responsible for the 3' incision and the C-terminal half is responsible for the 5' incision. The polypeptide is UvrABC system protein C (Leptospira borgpetersenii serovar Hardjo-bovis (strain JB197)).